We begin with the raw amino-acid sequence, 410 residues long: Cysteine desulfurase IscS (410 aa).

Pyridoxal 5'-phosphate-binding positions include 80 to 81 (AT), Asn-160, Gln-188, and 208 to 210 (SGH). Residue Lys-211 is modified to N6-(pyridoxal phosphate)lysine. Thr-248 is a pyridoxal 5'-phosphate binding site. Cys-334 serves as the catalytic Cysteine persulfide intermediate. Cys-334 serves as a coordination point for [2Fe-2S] cluster.

Belongs to the class-V pyridoxal-phosphate-dependent aminotransferase family. NifS/IscS subfamily. As to quaternary structure, homodimer. Forms a heterotetramer with IscU, interacts with other sulfur acceptors. Pyridoxal 5'-phosphate is required as a cofactor.

It is found in the cytoplasm. It carries out the reaction (sulfur carrier)-H + L-cysteine = (sulfur carrier)-SH + L-alanine. It functions in the pathway cofactor biosynthesis; iron-sulfur cluster biosynthesis. Its function is as follows. Master enzyme that delivers sulfur to a number of partners involved in Fe-S cluster assembly, tRNA modification or cofactor biosynthesis. Catalyzes the removal of elemental sulfur atoms from cysteine to produce alanine. Functions as a sulfur delivery protein for Fe-S cluster synthesis onto IscU, an Fe-S scaffold assembly protein, as well as other S acceptor proteins. This Rickettsia peacockii (strain Rustic) protein is Cysteine desulfurase IscS.